The primary structure comprises 313 residues: NADH-ubiquinone oxidoreductase chain 1 (313 aa).

8 consecutive transmembrane segments (helical) span residues Leu6–Leu26, Val71–Leu91, Met105–Phe125, Met149–Met169, Phe173–Val193, Gly220–Ile242, Phe255–Ala275, and Tyr293–Gly313.

It belongs to the complex I subunit 1 family.

The protein localises to the mitochondrion inner membrane. The enzyme catalyses a ubiquinone + NADH + 5 H(+)(in) = a ubiquinol + NAD(+) + 4 H(+)(out). Its function is as follows. Core subunit of the mitochondrial membrane respiratory chain NADH dehydrogenase (Complex I) that is believed to belong to the minimal assembly required for catalysis. Complex I functions in the transfer of electrons from NADH to the respiratory chain. The immediate electron acceptor for the enzyme is believed to be ubiquinone. This chain is NADH-ubiquinone oxidoreductase chain 1 (ND1), found in Heterololigo bleekeri (Spear squid).